The following is a 238-amino-acid chain: MRPSKRAADEMRAVSFERGISKHAEGSCLVKFGDTHVLCTASLEEKVPGWMRNTGKGWVTAEYGMLPRSTGDRMRREAAAGKQGGRTQEIQRLIGRSLRAVVDMQALGEVQITVDCDVIQADGGTRTAAITGGWVALHECLRWMEARQMVRVEKVLKDHIAAISCGIYEGEPVLDLDYAEDSVAETDSNFVMTGKGGIVEIQGTAEGAPFSEEEFANLMKLARGGIDRLVSLQKMAVA.

Phosphate-binding positions include arginine 86 and 124–126; that span reads GTR.

The protein belongs to the RNase PH family. As to quaternary structure, homohexameric ring arranged as a trimer of dimers.

The enzyme catalyses tRNA(n+1) + phosphate = tRNA(n) + a ribonucleoside 5'-diphosphate. Functionally, phosphorolytic 3'-5' exoribonuclease that plays an important role in tRNA 3'-end maturation. Removes nucleotide residues following the 3'-CCA terminus of tRNAs; can also add nucleotides to the ends of RNA molecules by using nucleoside diphosphates as substrates, but this may not be physiologically important. Probably plays a role in initiation of 16S rRNA degradation (leading to ribosome degradation) during starvation. In Brucella anthropi (strain ATCC 49188 / DSM 6882 / CCUG 24695 / JCM 21032 / LMG 3331 / NBRC 15819 / NCTC 12168 / Alc 37) (Ochrobactrum anthropi), this protein is Ribonuclease PH.